The chain runs to 1466 residues: ABC transporter G family member 10 (1466 aa).

Over residues 23–45 the composition is skewed to low complexity; sequence NTPQYENNNNNNNNTSGNESPNI. The interval 23-47 is disordered; it reads NTPQYENNNNNNNNTSGNESPNILN. The region spanning 138 to 392 is the ABC transporter 1 domain; that stretch reads VTIFNLFRPS…FLDLGFDCEP (255 aa). Residues 497–724 enclose the ABC transmembrane type-2 1 domain; the sequence is WGDRFALISK…NGSTMSYQDQ (228 aa). The next 6 membrane-spanning stretches (helical) occupy residues 501–521, 537–557, 586–606, 611–631, 641–661, and 767–787; these read FALI…ASLF, AIYA…GLTF, IPLT…MYGL, GKFF…VAFF, LYVS…YGGY, and IITF…LELF. The ABC transporter 2 domain maps to 838–1082; sequence FTWNHIHYTV…LTSYFERNGV (245 aa). Residue 874–881 participates in ATP binding; it reads GSSGAGKT. One can recognise an ABC transmembrane type-2 2 domain in the interval 1177–1399; sequence SYVYGIFTQA…LTCKEYFKPT (223 aa). The next 6 helical transmembrane spans lie at 1178-1198, 1214-1234, 1253-1273, 1290-1310, 1319-1339, and 1440-1460; these read YVYG…FTFW, IFEI…QFLI, FAIS…TICF, FYFY…GQVV, LAQT…GVLV, and YGIL…FVYL.

Belongs to the ABC transporter superfamily. ABCG family. PDR (TC 3.A.1.205) subfamily.

It is found in the membrane. In Dictyostelium discoideum (Social amoeba), this protein is ABC transporter G family member 10 (abcG10).